A 311-amino-acid polypeptide reads, in one-letter code: Phospholipid phosphatase 3 (311 aa).

Residues 1–33 (MQNYKYDKAIVAESKNGGSPALNNNPRKGGSKR) lie on the Cytoplasmic side of the membrane. Ser-19 carries the phosphoserine modification. Residues 34–54 (VLLICLDLFCLFMAGLPFIII) traverse the membrane as a helical segment. The Extracellular portion of the chain corresponds to 55–85 (ETSTIKPYHRGFYCNDESIKYPQKTGETIND). A helical membrane pass occupies residues 86-106 (AVLTAVGIVIAILAIITGEFY). Topologically, residues 107 to 123 (RIYYLKEKSRSTIQNPY) are cytoplasmic. A Dityrosine basolateral targeting motif motif is present at residues 109–110 (YY). A helical membrane pass occupies residues 124-144 (VAALYKQVGCFLFGCAISQSF). At 145 to 194 (TDIAKVSIGRLRPHFLNVCNPDFSQINCSVGYIQNYRCRGEDSKVQEARK) the chain is on the extracellular side. A phosphatase sequence motif I region spans residues 149–157 (KVSIGRLRP). N-linked (GlcNAc...) asparagine glycosylation is present at Asn-171. The Integrin-binding motif motif lies at 183–185 (RGE). Residues 195–215 (SFFSGHASFSMYTMLYLVLYL) traverse the membrane as a helical segment. The interval 197–200 (FSGH) is phosphatase sequence motif II. His-200 serves as the catalytic Proton donors. The Cytoplasmic segment spans residues 216 to 226 (QARFTWRGARL). A helical transmembrane segment spans residues 227 to 244 (LRPLLQFTLIMMAFYTGL). A phosphatase sequence motif III region spans residues 245–256 (SRVSDHKHHPSD). Over 245–258 (SRVSDHKHHPSDVL) the chain is Extracellular. Residue His-252 is the Nucleophile of the active site. Residues 259–279 (AGFAQGALVACCIVFFVSDLF) form a helical membrane-spanning segment. The segment at 276–311 (SDLFKTKTTLSLPPSAIRKDMLSPVDIDRSNHHNMV) is mediates interaction with CTNND1. Topologically, residues 280-311 (KTKTTLSLPPSAIRKDMLSPVDIDRSNHHNMV) are cytoplasmic.

Belongs to the PA-phosphatase related phosphoesterase family. Forms functional homodimers and homooligomers that are not required for substrate recognition and catalytic activity. Can also form heterooligomers with other PLPP2 and PLPP3. Interacts with CTNND1; negatively regulates the PLPP3-mediated stabilization of beta-catenin/CTNNB1. N-glycosylated. Contains high-mannose oligosaccharides.

It localises to the cell membrane. The protein localises to the basolateral cell membrane. Its subcellular location is the endoplasmic reticulum membrane. The protein resides in the endoplasmic reticulum-Golgi intermediate compartment membrane. It is found in the golgi apparatus membrane. It localises to the golgi apparatus. The protein localises to the trans-Golgi network membrane. Its subcellular location is the membrane raft. It catalyses the reaction a 1,2-diacyl-sn-glycero-3-phosphate + H2O = a 1,2-diacyl-sn-glycerol + phosphate. The catalysed reaction is 1,2-dihexadecanoyl-sn-glycero-3-phosphate + H2O = 1,2-dihexadecanoyl-sn-glycerol + phosphate. It carries out the reaction 1,2-di-(9Z-octadecenoyl)-sn-glycero-3-phosphate + H2O = 1,2-di-(9Z-octadecenoyl)-sn-glycerol + phosphate. The enzyme catalyses a monoacyl-sn-glycero-3-phosphate + H2O = a monoacylglycerol + phosphate. It catalyses the reaction (9Z)-octadecenoyl-sn-glycero-3-phosphate + H2O = (9Z-octadecenoyl)-glycerol + phosphate. The catalysed reaction is sphing-4-enine 1-phosphate + H2O = sphing-4-enine + phosphate. It carries out the reaction an N-acylsphing-4-enine 1-phosphate + H2O = an N-acylsphing-4-enine + phosphate. The enzyme catalyses N-(octanoyl)-sphing-4-enine-1-phosphate + H2O = N-octanoylsphing-4-enine + phosphate. It catalyses the reaction N-(9Z-octadecenoyl)-ethanolamine phosphate + H2O = N-(9Z-octadecenoyl) ethanolamine + phosphate. The protein operates within lipid metabolism; phospholipid metabolism. With respect to regulation, magnesium-independent phospholipid phosphatase. Insensitive to N-ethylmaleimide. Inhibited by sphingosine, zinc ions and modestly by propanolol. Functionally, magnesium-independent phospholipid phosphatase of the plasma membrane that catalyzes the dephosphorylation of a variety of glycerolipid and sphingolipid phosphate esters including phosphatidate/PA, lysophosphatidate/LPA, diacylglycerol pyrophosphate/DGPP, sphingosine 1-phosphate/S1P and ceramide 1-phosphate/C1P. Also acts on N-oleoyl ethanolamine phosphate/N-(9Z-octadecenoyl)-ethanolamine phosphate, a potential physiological compound. Has both an extracellular and an intracellular phosphatase activity, allowing the hydrolysis and the cellular uptake of these bioactive lipid mediators from the milieu, regulating signal transduction in different cellular processes. Through the dephosphorylation of extracellular sphingosine-1-phosphate and the regulation of its extra- and intracellular availability, plays a role in vascular homeostasis, regulating endothelial cell migration, adhesion, survival, proliferation and the production of pro-inflammatory cytokines. By maintaining the appropriate levels of this lipid in the cerebellum, also ensure its proper development and function. Through its intracellular lipid phosphatase activity may act in early compartments of the secretory pathway, regulating the formation of Golgi to endoplasmic reticulum retrograde transport carriers. Its function is as follows. Independently of this phosphatase activity may also function in the Wnt signaling pathway and the stabilization of beta-catenin/CTNNB1, thereby regulating cell proliferation, migration and differentiation in angiogenesis or yet in tumor growth. Also plays a role in integrin-mediated cell-cell adhesion in angiogenesis. The sequence is that of Phospholipid phosphatase 3 from Bos taurus (Bovine).